The following is a 219-amino-acid chain: Casein kinase II subunit beta' (219 aa).

Phosphothreonine; by autocatalysis is present on threonine 2.

This sequence belongs to the casein kinase 2 subunit beta family. In terms of assembly, tetramer of two alpha and two beta' subunits. Phosphorylated by alpha subunit.

In terms of biological role, participates in Wnt signaling. Plays a complex role in regulating the basal catalytic activity of the alpha subunit. The protein is Casein kinase II subunit beta' (CkIIbeta2) of Drosophila melanogaster (Fruit fly).